The chain runs to 265 residues: Neuronal membrane glycoprotein M6-b (265 aa).

A helical membrane pass occupies residues Gly-31–Phe-51. Residue Asn-73 is glycosylated (N-linked (GlcNAc...) asparagine). 2 consecutive transmembrane segments (helical) span residues Val-90–Phe-110 and Phe-136–Val-156. Asn-177 carries N-linked (GlcNAc...) asparagine glycosylation. Residues Leu-224 to Met-244 form a helical membrane-spanning segment. Ser-257 is subject to Phosphoserine.

Belongs to the myelin proteolipid protein family. As to quaternary structure, interacts with SERT. As to expression, neurons and glia; cerebellar Bergmann glia, in glia within white matter tracts of the cerebellum and cerebrum, and in embryonic dorsal root ganglia.

The protein localises to the cell membrane. Its function is as follows. May be involved in neural development. Involved in regulation of osteoblast function and bone formation. Involved in matrix vesicle release by osteoblasts; this function seems to involve maintenance of the actin cytoskeleton. May be involved in cellular trafficking of SERT and thereby in regulation of serotonin uptake. This chain is Neuronal membrane glycoprotein M6-b (GPM6B), found in Homo sapiens (Human).